Here is a 369-residue protein sequence, read N- to C-terminus: Flagellar P-ring protein (369 aa).

The N-terminal stretch at 1–22 (MIKLKQLIAATLLLSAAFGAHA) is a signal peptide.

It belongs to the FlgI family. The basal body constitutes a major portion of the flagellar organelle and consists of four rings (L,P,S, and M) mounted on a central rod.

The protein localises to the periplasm. The protein resides in the bacterial flagellum basal body. In terms of biological role, assembles around the rod to form the L-ring and probably protects the motor/basal body from shearing forces during rotation. The protein is Flagellar P-ring protein of Pseudomonas syringae pv. tomato (strain ATCC BAA-871 / DC3000).